Reading from the N-terminus, the 320-residue chain is Cytochrome f (320 aa).

An N-terminal signal peptide occupies residues 1-35 (MHTKNLFYSRPQQITQYLSAFLMMVILTRTSISSA). Residues tyrosine 36, cysteine 56, cysteine 59, and histidine 60 each coordinate heme. The chain crosses the membrane as a helical span at residues 286–306 (VQVLLFFFASIILAQIFLVLK).

This sequence belongs to the cytochrome f family. In terms of assembly, the 4 large subunits of the cytochrome b6-f complex are cytochrome b6, subunit IV (17 kDa polypeptide, petD), cytochrome f and the Rieske protein, while the 4 small subunits are PetG, PetL, PetM and PetN. The complex functions as a dimer. Requires heme as cofactor.

It localises to the plastid thylakoid membrane. Functionally, component of the cytochrome b6-f complex, which mediates electron transfer between photosystem II (PSII) and photosystem I (PSI), cyclic electron flow around PSI, and state transitions. This is Cytochrome f from Cuscuta obtusiflora (Peruvian dodder).